The following is a 530-amino-acid chain: MSLKWTSVFLLIQLSCYFSSGSCGKVLVWPTEYSHWINMKTILEELVQRGHEVTVLTSSASTLVNASKSSAIKLEVYPTSLTKNYLEDSLLKILDRWIYGVSKNTFWSYFSQLQELCWEYYDYSNKLCKDAVLNKKLMMKLQESKFDVILADALNPCGELLAELFNIPFLYSLRFSVGYTFEKNGGGFLFPPSYVPVVMSELSDQMIFMERIKNMIHMLYFDFWFQIYDLKKWDQFYSEVLGRPTTLFETMGKAEMWLIRTYWDFEFPRPFLPNVDFVGGLHCKPAKPLPKEMEEFVQSSGENGIVVFSLGSMISNMSEESANMIASALAQIPQKVLWRFDGKKPNTLGSNTRLYKWLPQNDLLGHPKTKAFITHGGTNGIYEAIYHGIPMVGIPLFADQHDNIAHMKAKGAALSVDIRTMSSRDLLNALKSVINDPVYKENVMKLSRIHHDQPMKPLDRAVFWIEFVMRHKGAKHLRVAAHNLTWIQYHSLDVIAFLLACVATVIFIITKFCLFCFRKLAKKGKKKKRD.

The N-terminal stretch at 1–23 is a signal peptide; that stretch reads MSLKWTSVFLLIQLSCYFSSGSC. N-linked (GlcNAc...) asparagine glycosylation is present at asparagine 65. Lysine 136 carries the N6-succinyllysine modification. N-linked (GlcNAc...) asparagine glycans are attached at residues asparagine 316 and asparagine 483. Residues 495 to 515 traverse the membrane as a helical segment; that stretch reads IAFLLACVATVIFIITKFCLF.

This sequence belongs to the UDP-glycosyltransferase family. Expressed in many tissues. Present in liver, prostate and testis.

The protein localises to the endoplasmic reticulum membrane. The catalysed reaction is glucuronate acceptor + UDP-alpha-D-glucuronate = acceptor beta-D-glucuronoside + UDP + H(+). The enzyme catalyses 17alpha-estradiol + UDP-alpha-D-glucuronate = 17alpha-estradiol 3-O-(beta-D-glucuronate) + UDP + H(+). It carries out the reaction 16alpha,17alpha-estriol + UDP-alpha-D-glucuronate = 16alpha,17alpha-estriol 3-O-(beta-D-glucuronate) + UDP + H(+). It catalyses the reaction 17beta-hydroxy-5alpha-androstan-3-one + UDP-alpha-D-glucuronate = 5alpha-dihydrotestosterone 17-O-(beta-D-glucuronate) + UDP + H(+). UDP-glucuronosyltransferase (UGT) that catalyzes phase II biotransformation reactions in which lipophilic substrates are conjugated with glucuronic acid to increase the metabolite's water solubility, thereby facilitating excretion into either the urine or bile. Essential for the elimination and detoxification of drugs, xenobiotics and endogenous compounds. Catalyzes the glucuronidation of endogenous steroid hormones such as androgens (testosterone, androsterone) and estrogens (estradiol, epiestradiol, estriol, catechol estrogens). Displays glucuronidation activity toward several classes of xenobiotic substrates, including phenolic compounds (eugenol, 4-nitrophenol, 4-hydroxybiphenyl) and phenylpropanoids (naringenin, coumarins). Catalyzes the glucuronidation of monoterpenoid alcohols such as borneol, menthol and isomenthol, a class of natural compounds used in essential oils. In Homo sapiens (Human), this protein is UDP-glucuronosyltransferase 2B15.